The following is a 237-amino-acid chain: MSIHISAKKGDIADKILLPGDPLRAKFIAENFLEDAVCFNEVRNMFGYTGTYKGHRVSVMGTGMGMPSISIYARELIVDYGVKTLIRVGTAGAIDPEVHVRELVLAQAAATNSNIIRNDFPEFDFPQIADFGLLDKAYHIAREMGVTTHVGNVLSSDVFYTNMPERNMALGKLGVKAIEMEAAALYYLATQHHVKALGIMTISDNLNDPTEDTTAEERQTTFTDMMKIGLETLIAND.

A purine D-ribonucleoside is bound at residue His4. Phosphate contacts are provided by residues Gly20, Arg24, Arg43, and 87-90 (RVGT). A purine D-ribonucleoside is bound by residues 179–181 (EME) and 203–204 (SD). Asp204 serves as the catalytic Proton donor.

Belongs to the PNP/UDP phosphorylase family. Homohexamer; trimer of homodimers.

It carries out the reaction a purine D-ribonucleoside + phosphate = a purine nucleobase + alpha-D-ribose 1-phosphate. The enzyme catalyses a purine 2'-deoxy-D-ribonucleoside + phosphate = a purine nucleobase + 2-deoxy-alpha-D-ribose 1-phosphate. Catalyzes the reversible phosphorolytic breakdown of the N-glycosidic bond in the beta-(deoxy)ribonucleoside molecules, with the formation of the corresponding free purine bases and pentose-1-phosphate. The protein is Purine nucleoside phosphorylase DeoD-type of Streptococcus pyogenes serotype M5 (strain Manfredo).